Here is a 384-residue protein sequence, read N- to C-terminus: 8-amino-7-oxononanoate synthase (384 aa).

R21 lines the substrate pocket. Position 108-109 (G108–Y109) interacts with pyridoxal 5'-phosphate. H133 contacts substrate. S179, H207, and T233 together coordinate pyridoxal 5'-phosphate. K236 carries the N6-(pyridoxal phosphate)lysine modification. T350 is a binding site for substrate.

It belongs to the class-II pyridoxal-phosphate-dependent aminotransferase family. BioF subfamily. Homodimer. The cofactor is pyridoxal 5'-phosphate.

It carries out the reaction 6-carboxyhexanoyl-[ACP] + L-alanine + H(+) = (8S)-8-amino-7-oxononanoate + holo-[ACP] + CO2. Its pathway is cofactor biosynthesis; biotin biosynthesis. Its function is as follows. Catalyzes the decarboxylative condensation of pimeloyl-[acyl-carrier protein] and L-alanine to produce 8-amino-7-oxononanoate (AON), [acyl-carrier protein], and carbon dioxide. This Buchnera aphidicola subsp. Baizongia pistaciae (strain Bp) protein is 8-amino-7-oxononanoate synthase.